A 433-amino-acid chain; its full sequence is Enolase (433 aa).

S1 carries the N-acetylserine modification. (2R)-2-phosphoglycerate-binding residues include S36 and H157. Catalysis depends on E209, which acts as the Proton donor. Residues D244, E294, and D319 each coordinate Mn(2+). (2R)-2-phosphoglycerate-binding residues include K344, R373, and S374. K344 serves as the catalytic Proton acceptor.

This sequence belongs to the enolase family. Homodimer. It depends on Mg(2+) as a cofactor.

The protein localises to the cytoplasm. It catalyses the reaction (2R)-2-phosphoglycerate = phosphoenolpyruvate + H2O. It functions in the pathway carbohydrate degradation; glycolysis; pyruvate from D-glyceraldehyde 3-phosphate: step 4/5. Inhibited by 2-phosphoglycolic acid. This is Enolase from Homarus gammarus (European lobster).